Consider the following 1059-residue polypeptide: Nonsense-mediated mRNA decay factor SMG7 (1059 aa).

TPR repeat units lie at residues 149–183 (DQQSQNLSDKDGKELAEVQKALKSCHRCLIYLGDL) and 184–217 (ARYKGMYAEGDSRSRQYASASSYYLQAASLWPAS). A compositionally biased stretch (polar residues) spans 806 to 817 (SHVSPAHSQSTS). Disordered regions lie at residues 806–826 (SHVSPAHSQSTSFGGGSKWSP), 927–955 (HLGPPPGFNSVPAKLQKEPAPGSELSGNN), 987–1015 (SGKPEHLGSTGNGLNGPANFPFPGKQVPT), and 1040–1059 (STQLPEQYQGQSTWSSRHFV).

In terms of assembly, interacts with EXA1. As to expression, expressed in flowers and at lower levels in stems and leaves.

It localises to the cytoplasm. It is found in the P-body. Plays multiple roles in growth and development. Involved in nonsense-mediated mRNA decay (NMD). May provide a link to the mRNA degradation machinery to initiate NMD and serve as an adapter for UPF proteins function. Required for meiotic progression through anaphase II of pollen mother cells. May counteract cyclin-dependent kinase (CDK) activity at the end of meiosis. May play a role in plant defense through its involvement in NMD. Together with EXA1, helps to restrict cell death induction during pathogen infection in a salicylic acid- (SA) and reactive oxygen species- (ROS) independent manner. This Arabidopsis thaliana (Mouse-ear cress) protein is Nonsense-mediated mRNA decay factor SMG7.